Reading from the N-terminus, the 699-residue chain is Protein phosphatase 1 regulatory subunit 37 (699 aa).

Positions 1 to 12 (MEIPPQEAPPGP) are enriched in pro residues. Residues 1–42 (MEIPPQEAPPGPGADGEAEEAPVEAPSPGPASPPADGRLKAA) are disordered. 2 positions are modified to phosphoserine: serine 50 and serine 56. LRR repeat units lie at residues 220 to 240 (SLAV…MLLA), 248 to 269 (TLRE…AQLG), 277 to 297 (SLQI…AYIC), 306 to 326 (GLAT…AFLG), and 334 to 354 (SLET…RNLK). The disordered stretch occupies residues 467 to 667 (RLQLSASMPE…PPGPEAKVGS (201 aa)). The segment covering 510–525 (SDSDSDSEGEDRDEAD) has biased composition (acidic residues). Residue serine 566 is modified to Phosphoserine. Pro residues-rich tracts occupy residues 588–613 (PPVP…PFPT) and 622–642 (DPGP…PPLP).

It belongs to the PPP1R37 family. As to quaternary structure, interacts with PPP1CA.

Functionally, inhibits phosphatase activity of protein phosphatase 1 (PP1) complexes. The protein is Protein phosphatase 1 regulatory subunit 37 (PPP1R37) of Bos taurus (Bovine).